The following is a 452-amino-acid chain: Chromosomal replication initiator protein DnaA (452 aa).

Residues 1–85 (MSTTAWQKCL…IEVGSKPVEA (85 aa)) are domain I, interacts with DnaA modulators. The domain II stretch occupies residues 85 to 115 (AVDTPAETIVTSSSTAPLKSAPKKAVDYKSS). A domain III, AAA+ region region spans residues 116–332 (HLNKKFVFDS…GALRRVIANA (217 aa)). Residues glycine 160, glycine 162, lysine 163, and threonine 164 each coordinate ATP. The interval 333 to 452 (HFTGKPITIE…YKNLMRILSS (120 aa)) is domain IV, binds dsDNA.

This sequence belongs to the DnaA family. In terms of assembly, oligomerizes as a right-handed, spiral filament on DNA at oriC.

Its subcellular location is the cytoplasm. Plays an essential role in the initiation and regulation of chromosomal replication. ATP-DnaA binds to the origin of replication (oriC) to initiate formation of the DNA replication initiation complex once per cell cycle. Binds the DnaA box (a 9 base pair repeat at the origin) and separates the double-stranded (ds)DNA. Forms a right-handed helical filament on oriC DNA; dsDNA binds to the exterior of the filament while single-stranded (ss)DNA is stabiized in the filament's interior. The ATP-DnaA-oriC complex binds and stabilizes one strand of the AT-rich DNA unwinding element (DUE), permitting loading of DNA polymerase. After initiation quickly degrades to an ADP-DnaA complex that is not apt for DNA replication. Binds acidic phospholipids. The sequence is that of Chromosomal replication initiator protein DnaA from Legionella pneumophila (strain Paris).